The primary structure comprises 237 residues: Probable septum site-determining protein MinC (237 aa).

Belongs to the MinC family. Interacts with MinD and FtsZ.

Functionally, cell division inhibitor that blocks the formation of polar Z ring septums. Rapidly oscillates between the poles of the cell to destabilize FtsZ filaments that have formed before they mature into polar Z rings. Prevents FtsZ polymerization. The protein is Probable septum site-determining protein MinC of Buchnera aphidicola subsp. Acyrthosiphon pisum (strain 5A).